A 357-amino-acid chain; its full sequence is Peptide chain release factor 1 (357 aa).

Residue Gln-234 is modified to N5-methylglutamine.

This sequence belongs to the prokaryotic/mitochondrial release factor family. In terms of processing, methylated by PrmC. Methylation increases the termination efficiency of RF1.

The protein resides in the cytoplasm. Peptide chain release factor 1 directs the termination of translation in response to the peptide chain termination codons UAG and UAA. This Arthrobacter sp. (strain FB24) protein is Peptide chain release factor 1.